The primary structure comprises 95 residues: Small ribosomal subunit protein bS6 (95 aa).

Belongs to the bacterial ribosomal protein bS6 family.

Binds together with bS18 to 16S ribosomal RNA. The protein is Small ribosomal subunit protein bS6 of Corynebacterium jeikeium (strain K411).